Here is a 298-residue protein sequence, read N- to C-terminus: 4-hydroxy-tetrahydrodipicolinate synthase (298 aa).

T51 is a pyruvate binding site. Catalysis depends on Y139, which acts as the Proton donor/acceptor. The active-site Schiff-base intermediate with substrate is the K167. Position 209 (I209) interacts with pyruvate.

This sequence belongs to the DapA family. In terms of assembly, homotetramer; dimer of dimers.

It localises to the cytoplasm. The enzyme catalyses L-aspartate 4-semialdehyde + pyruvate = (2S,4S)-4-hydroxy-2,3,4,5-tetrahydrodipicolinate + H2O + H(+). It participates in amino-acid biosynthesis; L-lysine biosynthesis via DAP pathway; (S)-tetrahydrodipicolinate from L-aspartate: step 3/4. In terms of biological role, catalyzes the condensation of (S)-aspartate-beta-semialdehyde [(S)-ASA] and pyruvate to 4-hydroxy-tetrahydrodipicolinate (HTPA). This Histophilus somni (strain 129Pt) (Haemophilus somnus) protein is 4-hydroxy-tetrahydrodipicolinate synthase.